The primary structure comprises 343 residues: ATPase GET3 (343 aa).

32 to 39 (KGGVGKTT) contacts ATP. Residue Asp61 is part of the active site. ATP contacts are provided by Glu245 and Asn272. Residues Cys283 and Cys286 each coordinate Zn(2+).

It belongs to the arsA ATPase family. As to quaternary structure, homodimer.

Its subcellular location is the cytoplasm. The protein resides in the endoplasmic reticulum. In terms of biological role, ATPase required for the post-translational delivery of tail-anchored (TA) proteins to the endoplasmic reticulum. Recognizes and selectively binds the transmembrane domain of TA proteins in the cytosol. This complex then targets to the endoplasmic reticulum by membrane-bound receptors, where the tail-anchored protein is released for insertion. This process is regulated by ATP binding and hydrolysis. ATP binding drives the homodimer towards the closed dimer state, facilitating recognition of newly synthesized TA membrane proteins. ATP hydrolysis is required for insertion. Subsequently, the homodimer reverts towards the open dimer state, lowering its affinity for the membrane-bound receptor, and returning it to the cytosol to initiate a new round of targeting. The protein is ATPase GET3 of Pyricularia oryzae (strain 70-15 / ATCC MYA-4617 / FGSC 8958) (Rice blast fungus).